The following is a 211-amino-acid chain: ATP phosphoribosyltransferase (211 aa).

Belongs to the ATP phosphoribosyltransferase family. Short subfamily. Heteromultimer composed of HisG and HisZ subunits.

The protein resides in the cytoplasm. The catalysed reaction is 1-(5-phospho-beta-D-ribosyl)-ATP + diphosphate = 5-phospho-alpha-D-ribose 1-diphosphate + ATP. It functions in the pathway amino-acid biosynthesis; L-histidine biosynthesis; L-histidine from 5-phospho-alpha-D-ribose 1-diphosphate: step 1/9. Functionally, catalyzes the condensation of ATP and 5-phosphoribose 1-diphosphate to form N'-(5'-phosphoribosyl)-ATP (PR-ATP). Has a crucial role in the pathway because the rate of histidine biosynthesis seems to be controlled primarily by regulation of HisG enzymatic activity. This is ATP phosphoribosyltransferase from Pseudomonas putida (strain W619).